The chain runs to 254 residues: Leucyl/phenylalanyl-tRNA--protein transferase (254 aa).

It belongs to the L/F-transferase family.

The protein resides in the cytoplasm. It catalyses the reaction N-terminal L-lysyl-[protein] + L-leucyl-tRNA(Leu) = N-terminal L-leucyl-L-lysyl-[protein] + tRNA(Leu) + H(+). It carries out the reaction N-terminal L-arginyl-[protein] + L-leucyl-tRNA(Leu) = N-terminal L-leucyl-L-arginyl-[protein] + tRNA(Leu) + H(+). The catalysed reaction is L-phenylalanyl-tRNA(Phe) + an N-terminal L-alpha-aminoacyl-[protein] = an N-terminal L-phenylalanyl-L-alpha-aminoacyl-[protein] + tRNA(Phe). Its function is as follows. Functions in the N-end rule pathway of protein degradation where it conjugates Leu, Phe and, less efficiently, Met from aminoacyl-tRNAs to the N-termini of proteins containing an N-terminal arginine or lysine. The chain is Leucyl/phenylalanyl-tRNA--protein transferase from Burkholderia orbicola (strain MC0-3).